The primary structure comprises 439 residues: Acyl transferase 4 (439 aa).

Residues H166 and D382 each act as proton acceptor in the active site.

This sequence belongs to the plant acyltransferase family.

In terms of biological role, grass-specific monolignol p-coumaroyl transferase involved in the biosynthesis of acylated monolignols or monolignol conjugates that serve as monomer precursors of lignin. Can synthesize sinapyl p-coumarate, p-coumaryl p-coumarate, sinapyl caffeate and p-coumaryl caffeate in vitro. The sequence is that of Acyl transferase 4 from Oryza sativa subsp. japonica (Rice).